The following is a 328-amino-acid chain: tRNA dimethylallyltransferase (328 aa).

19–26 (GPTASGKT) is an ATP binding site. Residue 21–26 (TASGKT) coordinates substrate. 3 interaction with substrate tRNA regions span residues 50-53 (DSAL), 174-178 (QRIQR), and 257-262 (RCVGYR).

Belongs to the IPP transferase family. As to quaternary structure, monomer. Mg(2+) is required as a cofactor.

It catalyses the reaction adenosine(37) in tRNA + dimethylallyl diphosphate = N(6)-dimethylallyladenosine(37) in tRNA + diphosphate. Its function is as follows. Catalyzes the transfer of a dimethylallyl group onto the adenine at position 37 in tRNAs that read codons beginning with uridine, leading to the formation of N6-(dimethylallyl)adenosine (i(6)A). The sequence is that of tRNA dimethylallyltransferase from Leptothrix cholodnii (strain ATCC 51168 / LMG 8142 / SP-6) (Leptothrix discophora (strain SP-6)).